Here is a 347-residue protein sequence, read N- to C-terminus: D-alanine--D-alanine ligase (347 aa).

Positions 131–333 (KRVLESAGIA…YPELIERLVD (203 aa)) constitute an ATP-grasp domain. 161–216 (EEKLAYPVFTKPSNMGSSVGISKSENQEELRQALELAFRYDSRVLVEQGVNAREIE) lines the ATP pocket. Asp-287, Glu-300, and Asn-302 together coordinate Mg(2+).

Belongs to the D-alanine--D-alanine ligase family. Mg(2+) is required as a cofactor. Mn(2+) serves as cofactor.

The protein localises to the cytoplasm. The enzyme catalyses 2 D-alanine + ATP = D-alanyl-D-alanine + ADP + phosphate + H(+). It participates in cell wall biogenesis; peptidoglycan biosynthesis. Its function is as follows. Cell wall formation. This chain is D-alanine--D-alanine ligase, found in Streptococcus pneumoniae (strain CGSP14).